Consider the following 403-residue polypeptide: Ribosomal RNA large subunit methyltransferase I (403 aa).

A PUA domain is found at 9 to 88; that stretch reads YPRLVLSKGR…ESIDIAFFTR (80 aa).

It belongs to the methyltransferase superfamily. RlmI family.

The protein localises to the cytoplasm. It carries out the reaction cytidine(1962) in 23S rRNA + S-adenosyl-L-methionine = 5-methylcytidine(1962) in 23S rRNA + S-adenosyl-L-homocysteine + H(+). Specifically methylates the cytosine at position 1962 (m5C1962) of 23S rRNA. The chain is Ribosomal RNA large subunit methyltransferase I from Salmonella paratyphi A (strain ATCC 9150 / SARB42).